A 237-amino-acid polypeptide reads, in one-letter code: Phosphoribosylaminoimidazole-succinocarboxamide synthase (237 aa).

It belongs to the SAICAR synthetase family.

It catalyses the reaction 5-amino-1-(5-phospho-D-ribosyl)imidazole-4-carboxylate + L-aspartate + ATP = (2S)-2-[5-amino-1-(5-phospho-beta-D-ribosyl)imidazole-4-carboxamido]succinate + ADP + phosphate + 2 H(+). The protein operates within purine metabolism; IMP biosynthesis via de novo pathway; 5-amino-1-(5-phospho-D-ribosyl)imidazole-4-carboxamide from 5-amino-1-(5-phospho-D-ribosyl)imidazole-4-carboxylate: step 1/2. In Alteromonas mediterranea (strain DSM 17117 / CIP 110805 / LMG 28347 / Deep ecotype), this protein is Phosphoribosylaminoimidazole-succinocarboxamide synthase.